Reading from the N-terminus, the 315-residue chain is tRNA uridine(34) hydroxylase (315 aa).

A Rhodanese domain is found at 145-235 (MKNDFILVDM…GIIEYVNFIK (91 aa)). The Cysteine persulfide intermediate role is filled by C199.

The protein belongs to the TrhO family.

It carries out the reaction uridine(34) in tRNA + AH2 + O2 = 5-hydroxyuridine(34) in tRNA + A + H2O. Its function is as follows. Catalyzes oxygen-dependent 5-hydroxyuridine (ho5U) modification at position 34 in tRNAs. The sequence is that of tRNA uridine(34) hydroxylase from Wigglesworthia glossinidia brevipalpis.